A 578-amino-acid chain; its full sequence is Isocitrate dehydrogenase kinase/phosphatase (578 aa).

ATP is bound by residues 315 to 321 (APGIRGM) and Lys336. Asp371 is an active-site residue.

This sequence belongs to the AceK family.

Its subcellular location is the cytoplasm. It catalyses the reaction L-seryl-[isocitrate dehydrogenase] + ATP = O-phospho-L-seryl-[isocitrate dehydrogenase] + ADP + H(+). In terms of biological role, bifunctional enzyme which can phosphorylate or dephosphorylate isocitrate dehydrogenase (IDH) on a specific serine residue. This is a regulatory mechanism which enables bacteria to bypass the Krebs cycle via the glyoxylate shunt in response to the source of carbon. When bacteria are grown on glucose, IDH is fully active and unphosphorylated, but when grown on acetate or ethanol, the activity of IDH declines drastically concomitant with its phosphorylation. The protein is Isocitrate dehydrogenase kinase/phosphatase of Shigella boydii serotype 18 (strain CDC 3083-94 / BS512).